A 167-amino-acid chain; its full sequence is Photosystem I assembly protein Ycf3 (167 aa).

TPR repeat units follow at residues 35–68 (AFSY…EEDP), 72–105 (SFIL…NNKL), and 120–153 (AVKA…APSN).

It belongs to the Ycf3 family.

Its subcellular location is the plastid. The protein resides in the chloroplast thylakoid membrane. Functionally, essential for the assembly of the photosystem I (PSI) complex. May act as a chaperone-like factor to guide the assembly of the PSI subunits. The protein is Photosystem I assembly protein Ycf3 of Galdieria sulphuraria (Red alga).